A 434-amino-acid chain; its full sequence is ATP-dependent protease ATPase subunit HslU (434 aa).

Residues Ile-18, 60–65, Asp-247, Glu-312, and Arg-384 each bind ATP; that span reads GVGKTE.

The protein belongs to the ClpX chaperone family. HslU subfamily. A double ring-shaped homohexamer of HslV is capped on each side by a ring-shaped HslU homohexamer. The assembly of the HslU/HslV complex is dependent on binding of ATP.

It is found in the cytoplasm. In terms of biological role, ATPase subunit of a proteasome-like degradation complex; this subunit has chaperone activity. The binding of ATP and its subsequent hydrolysis by HslU are essential for unfolding of protein substrates subsequently hydrolyzed by HslV. HslU recognizes the N-terminal part of its protein substrates and unfolds these before they are guided to HslV for hydrolysis. The polypeptide is ATP-dependent protease ATPase subunit HslU (Brucella anthropi (strain ATCC 49188 / DSM 6882 / CCUG 24695 / JCM 21032 / LMG 3331 / NBRC 15819 / NCTC 12168 / Alc 37) (Ochrobactrum anthropi)).